The following is a 147-amino-acid chain: 16 kDa phloem protein 2 (147 aa).

The C2 domain occupies 1 to 103 (MPHGTLEVVL…FVEGSIPPTA (103 aa)). Positions 20, 26, 73, 75, and 81 each coordinate Ca(2+). Positions 126–147 (ENRSRGMDEESYGGWKNSEASY) are disordered.

Ca(2+) serves as cofactor.

Its function is as follows. Binds to both sense and antisense RNA. Can also bind sheared DNA and dodecamer DNA with a low affinity. Interacts with mesophyll plasmodesmata to mediate its own cell-to-cell transport and potentiate RNA trafficking. May play a role in plant defense signaling. The protein is 16 kDa phloem protein 2 of Arabidopsis thaliana (Mouse-ear cress).